The primary structure comprises 257 residues: tRNA uridine(34) hydroxylase (257 aa).

The Rhodanese domain maps to 128-222; sequence NGRRLVMLDA…YFEQVGGEGY (95 aa). Residue Cys-182 is the Cysteine persulfide intermediate of the active site.

It belongs to the TrhO family.

The catalysed reaction is uridine(34) in tRNA + AH2 + O2 = 5-hydroxyuridine(34) in tRNA + A + H2O. In terms of biological role, catalyzes oxygen-dependent 5-hydroxyuridine (ho5U) modification at position 34 in tRNAs. This Xylella fastidiosa (strain 9a5c) protein is tRNA uridine(34) hydroxylase.